The following is a 346-amino-acid chain: Actin-like protein 10 (346 aa).

This sequence belongs to the actin family.

This is Actin-like protein 10 (Actl10) from Mus musculus (Mouse).